Consider the following 425-residue polypeptide: Serine hydroxymethyltransferase (425 aa).

Residues leucine 126 and 130–132 (GHL) each bind (6S)-5,6,7,8-tetrahydrofolate. The residue at position 234 (lysine 234) is an N6-(pyridoxal phosphate)lysine.

The protein belongs to the SHMT family. In terms of assembly, homodimer. Pyridoxal 5'-phosphate is required as a cofactor.

The protein resides in the cytoplasm. The enzyme catalyses (6R)-5,10-methylene-5,6,7,8-tetrahydrofolate + glycine + H2O = (6S)-5,6,7,8-tetrahydrofolate + L-serine. It participates in one-carbon metabolism; tetrahydrofolate interconversion. It functions in the pathway amino-acid biosynthesis; glycine biosynthesis; glycine from L-serine: step 1/1. In terms of biological role, catalyzes the reversible interconversion of serine and glycine with tetrahydrofolate (THF) serving as the one-carbon carrier. This reaction serves as the major source of one-carbon groups required for the biosynthesis of purines, thymidylate, methionine, and other important biomolecules. Also exhibits THF-independent aldolase activity toward beta-hydroxyamino acids, producing glycine and aldehydes, via a retro-aldol mechanism. This Desulfotalea psychrophila (strain LSv54 / DSM 12343) protein is Serine hydroxymethyltransferase.